The primary structure comprises 504 residues: ATP synthase subunit alpha (504 aa).

ATP is bound at residue 169-176 (GDRGTGKT).

Belongs to the ATPase alpha/beta chains family. As to quaternary structure, F-type ATPases have 2 components, CF(1) - the catalytic core - and CF(0) - the membrane proton channel. CF(1) has five subunits: alpha(3), beta(3), gamma(1), delta(1), epsilon(1). CF(0) has three main subunits: a(1), b(2) and c(9-12). The alpha and beta chains form an alternating ring which encloses part of the gamma chain. CF(1) is attached to CF(0) by a central stalk formed by the gamma and epsilon chains, while a peripheral stalk is formed by the delta and b chains.

Its subcellular location is the cell inner membrane. The catalysed reaction is ATP + H2O + 4 H(+)(in) = ADP + phosphate + 5 H(+)(out). Functionally, produces ATP from ADP in the presence of a proton gradient across the membrane. The alpha chain is a regulatory subunit. This is ATP synthase subunit alpha from Leptospira biflexa serovar Patoc (strain Patoc 1 / Ames).